Reading from the N-terminus, the 460-residue chain is MATGKIVQVIGAVVDAEFPQDSVPKVYDALEVMNGKEKLVLEVQQQLGGGIVRCIAMGTSDGLSRGLKVEDLGHPIEVPVGKATLGRIMNVLGTPIDMKGEIETEERWSIHREAPTYEELSNSQELLETGIKVMDLICPFAKGGKVGLFGGAGVGKTVNMMELIRNIAIEHSGYSVFAGVGERTREGNDFYHEMTDSNVLDKVSLVYGQMNEPPGNRLRVALTGLTMAEKFRDEGRDVLLFVDNIYRYTLAGTEVSALLGRMPSAVGYQPTLAEEMGVLQERITSTKTGSITSVQAVYVPADDLTDPSPATTFAHLDATVVLSRQIASLGIYPAVDPLDSTSRQLDPLVVGQEHYDVARGVQSILQRYQELKDIIAILGMDELSEEDKLVVARARKIQRFLSQPFFVAEVFTGSPGKFVSLKDTIRGFKGILNGDYDHLPEQAFYMVGTIEEAVEKAKKL.

150 to 157 is an ATP binding site; the sequence is GGAGVGKT.

This sequence belongs to the ATPase alpha/beta chains family. As to quaternary structure, F-type ATPases have 2 components, CF(1) - the catalytic core - and CF(0) - the membrane proton channel. CF(1) has five subunits: alpha(3), beta(3), gamma(1), delta(1), epsilon(1). CF(0) has three main subunits: a(1), b(2) and c(9-12). The alpha and beta chains form an alternating ring which encloses part of the gamma chain. CF(1) is attached to CF(0) by a central stalk formed by the gamma and epsilon chains, while a peripheral stalk is formed by the delta and b chains.

Its subcellular location is the cell inner membrane. The enzyme catalyses ATP + H2O + 4 H(+)(in) = ADP + phosphate + 5 H(+)(out). Produces ATP from ADP in the presence of a proton gradient across the membrane. The catalytic sites are hosted primarily by the beta subunits. The sequence is that of ATP synthase subunit beta from Proteus mirabilis (strain HI4320).